The following is a 155-amino-acid chain: Large-conductance mechanosensitive channel (155 aa).

The next 3 helical transmembrane spans lie at 16 to 36, 40 to 60, and 88 to 108; these read VVDM…VNNL, VILP…LYII, and GVFL…FLLV.

The protein belongs to the MscL family. In terms of assembly, homopentamer.

It is found in the cell inner membrane. Its function is as follows. Channel that opens in response to stretch forces in the membrane lipid bilayer. May participate in the regulation of osmotic pressure changes within the cell. The protein is Large-conductance mechanosensitive channel of Chlorobium chlorochromatii (strain CaD3).